A 352-amino-acid chain; its full sequence is Farnesyl pyrophosphate synthase (352 aa).

K52, R55, and Q93 together coordinate isopentenyl diphosphate. Positions 100 and 104 each coordinate Mg(2+). R109 contributes to the dimethylallyl diphosphate binding site. R110 provides a ligand contact to isopentenyl diphosphate. Dimethylallyl diphosphate is bound by residues K197, T198, Q237, K254, and K263.

This sequence belongs to the FPP/GGPP synthase family. Mg(2+) is required as a cofactor.

The enzyme catalyses isopentenyl diphosphate + dimethylallyl diphosphate = (2E)-geranyl diphosphate + diphosphate. It catalyses the reaction isopentenyl diphosphate + (2E)-geranyl diphosphate = (2E,6E)-farnesyl diphosphate + diphosphate. The protein operates within isoprenoid biosynthesis; farnesyl diphosphate biosynthesis; farnesyl diphosphate from geranyl diphosphate and isopentenyl diphosphate: step 1/1. Its pathway is isoprenoid biosynthesis; geranyl diphosphate biosynthesis; geranyl diphosphate from dimethylallyl diphosphate and isopentenyl diphosphate: step 1/1. Its function is as follows. Farnesyl pyrophosphate synthase; part of the second module of ergosterol biosynthesis pathway that includes the middle steps of the pathway. ERG20 catalyzes the sequential condensation of isopentenyl pyrophosphate with dimethylallyl pyrophosphate, and then with the resultant geranylpyrophosphate to the ultimate product farnesyl pyrophosphate. The second module is carried out in the vacuole and involves the formation of farnesyl diphosphate, which is also an important intermediate in the biosynthesis of ubiquinone, dolichol, heme and prenylated proteins. Activity by the mevalonate kinase ERG12 first converts mevalonate into 5-phosphomevalonate. 5-phosphomevalonate is then further converted to 5-diphosphomevalonate by the phosphomevalonate kinase ERG8. The diphosphomevalonate decarboxylase MVD1/ERG19 then produces isopentenyl diphosphate. The isopentenyl-diphosphate delta-isomerase IDI1 then catalyzes the 1,3-allylic rearrangement of the homoallylic substrate isopentenyl (IPP) to its highly electrophilic allylic isomer, dimethylallyl diphosphate (DMAPP). Finally the farnesyl diphosphate synthase ERG20 catalyzes the sequential condensation of isopentenyl pyrophosphate with dimethylallyl pyrophosphate, and then with the resultant geranylpyrophosphate to the ultimate product farnesyl pyrophosphate. This chain is Farnesyl pyrophosphate synthase (ERG20), found in Saccharomyces cerevisiae (strain ATCC 204508 / S288c) (Baker's yeast).